The sequence spans 180 residues: ATP-dependent protease subunit HslV (180 aa).

T6 is a catalytic residue. Residues G162, C165, and T168 each coordinate Na(+).

It belongs to the peptidase T1B family. HslV subfamily. In terms of assembly, a double ring-shaped homohexamer of HslV is capped on each side by a ring-shaped HslU homohexamer. The assembly of the HslU/HslV complex is dependent on binding of ATP.

It localises to the cytoplasm. The catalysed reaction is ATP-dependent cleavage of peptide bonds with broad specificity.. Its activity is regulated as follows. Allosterically activated by HslU binding. Protease subunit of a proteasome-like degradation complex believed to be a general protein degrading machinery. The chain is ATP-dependent protease subunit HslV from Oleidesulfovibrio alaskensis (strain ATCC BAA-1058 / DSM 17464 / G20) (Desulfovibrio alaskensis).